Consider the following 477-residue polypeptide: MAGVEEAASCGSHLNGDLDPDEREEGAASTAEEAAKKKKRKKKKSKGAATGQQEPDKEAGASVDEVTRQLERQALEEKEKDDDDEDGDGDGDGATGKKKKKKKKKRGPKVQTDPPSVPICDLYPNGVFPKGQECEYPPTQDGRTAAWRTTSEEKKALDQASEEIWNDFREAAEAHRQVRKYVMSWIKPGMTMIEICEKMEDCSRKLIKENGLNAGLAFPTGCSLNNCAAHYTPNAGDTTVLQYDDICKIDFGTHISGRIIDCAFTVTFNPKYDTLLKAVKDATNTGIKCAGIDVRLCDVGEAIQEVMESYEVEIDGKTYQVKPIRNLNGHSIGPYRIHAGKTVPIVKGGEATRMEEGEVYAIETFGSTGKGVVHDDMECSHYMKNFDVGHVPIRLPRTKHLLNVINENFGTLAFCRRWLDRLGESKYLMALKNLCDLGIVDPYPPLCDIKGSYTAQFEHTILLRPTCKEVVSRGDDY.

The segment at 1-121 is disordered; sequence MAGVEEAASC…TDPPSVPICD (121 aa). Residue alanine 2 is modified to N-acetylalanine. A compositionally biased stretch (basic residues) spans 36-46; that stretch reads KKKKRKKKKSK. A Phosphoserine modification is found at serine 45. Residues 54-78 show a composition bias toward basic and acidic residues; sequence EPDKEAGASVDEVTRQLERQALEEK. At serine 62 the chain carries Phosphoserine; alternate. An O-linked (GlcNAc) serine; alternate glycan is attached at serine 62. Residues 79–91 are compositionally biased toward acidic residues; the sequence is EKDDDDEDGDGDG. Positions 96 to 108 are enriched in basic residues; sequence GKKKKKKKKKRGP. Residue histidine 230 coordinates substrate. Residues aspartate 250, aspartate 261, and histidine 330 each contribute to the a divalent metal cation site. Substrate is bound at residue histidine 338. The a divalent metal cation site is built by glutamate 363 and glutamate 458.

Belongs to the peptidase M24A family. Methionine aminopeptidase eukaryotic type 2 subfamily. Binds EIF2S1 at low magnesium concentrations. Interacts strongly with the eIF-2 gamma-subunit EIF2S3. Co(2+) is required as a cofactor. Zn(2+) serves as cofactor. Requires Mn(2+) as cofactor. It depends on Fe(2+) as a cofactor. In terms of processing, contains approximately 12 O-linked N-acetylglucosamine (GlcNAc) residues. O-glycosylation is required for EIF2S1 binding.

The protein localises to the cytoplasm. The enzyme catalyses Release of N-terminal amino acids, preferentially methionine, from peptides and arylamides.. Cotranslationally removes the N-terminal methionine from nascent proteins. The N-terminal methionine is often cleaved when the second residue in the primary sequence is small and uncharged (Met-Ala-, Cys, Gly, Pro, Ser, Thr, or Val). In terms of biological role, protects eukaryotic initiation factor EIF2S1 from translation-inhibiting phosphorylation by inhibitory kinases such as EIF2AK2/PKR and EIF2AK1/HCR. Plays a critical role in the regulation of protein synthesis. In Bos taurus (Bovine), this protein is Methionine aminopeptidase 2.